The chain runs to 621 residues: Ubiquitin-like-specific protease 1 (621 aa).

S2 is modified (N-acetylserine). Phosphoserine is present on residues S21 and S25. Disordered stretches follow at residues 116-150 and 169-196; these read FDGS…ENYS and RRRI…SNCD. Positions 124–141 are enriched in low complexity; sequence SGNSDVESRSSGSRSSDV. T179 is subject to Phosphothreonine. The span at 179–196 shows a compositional bias: polar residues; sequence TPSTSPISSLASQKSNCD. S264 carries the post-translational modification Phosphoserine. The interval 432–621 is protease; sequence NIEITVRDFK…AHLILTDALK (190 aa). Catalysis depends on residues H514, D531, and C580.

Belongs to the peptidase C48 family.

It catalyses the reaction Hydrolysis of the alpha-linked peptide bond in the sequence Gly-Gly-|-Ala-Thr-Tyr at the C-terminal end of the small ubiquitin-like modifier (SUMO) propeptide, Smt3, leading to the mature form of the protein. A second reaction involves the cleavage of an epsilon-linked peptide bond between the C-terminal glycine of the mature SUMO and the lysine epsilon-amino group of the target protein.. Protease that catalyzes two essential functions in the SUMO pathway: processing of full-length SMT3 to its mature form and deconjugation of SMT3 from targeted proteins. Has an essential role in the G2/M phase of the cell cycle. The sequence is that of Ubiquitin-like-specific protease 1 (ULP1) from Saccharomyces cerevisiae (strain ATCC 204508 / S288c) (Baker's yeast).